The chain runs to 231 residues: Uridylate cyclase (231 aa).

A Guanylate cyclase domain is found at 46–178 (TVLYADLDGS…RAANYAAKLT (133 aa)). Y49 contributes to the a ribonucleoside 5'-triphosphate binding site. Mn(2+) contacts are provided by D51 and D95. R96 lines the a ribonucleoside 5'-triphosphate pocket.

Belongs to the adenylyl cyclase class-4/guanylyl cyclase family. Pyrimidine cyclase subfamily. Homodimer. Mn(2+) is required as a cofactor.

Its subcellular location is the cytoplasm. The catalysed reaction is UTP = 3',5'-cyclic UMP + diphosphate. Its function is as follows. Pycsar (pyrimidine cyclase system for antiphage resistance) provides immunity against bacteriophage. The pyrimidine cyclase (PycC) synthesizes cyclic nucleotides in response to infection; these serve as specific second messenger signals. The signal activates the adjacent effector, leading to bacterial cell death and abortive phage infection. A clade B Pycsar system. In terms of biological role, the pyrimidine cyclase gene of a two-gene Pycsar system, generates cyclic UMP (cUMP) from UTP probably in response to bacteriophage infection. Expression of this and adjacent effector XpPycTIR (AC P0DV29) confers resistance to bacteriophage T7. When cells expressing the Pycsar system are infected phage T7 at low multiplicity of infection (0.2 MOI) the culture survives, at 2.0 MOI bacteria enter growth arrest. The same cells enter growth arrest after exposure to 2.5 mM cUMP but not cCMP; the effector protein responds only to the cUMP produced by its cognate NTP cyclase. This chain is Uridylate cyclase, found in Xanthomonas perforans.